Here is a 182-residue protein sequence, read N- to C-terminus: Nucleoside triphosphate/diphosphate phosphatase (182 aa).

Arg-27 functions as the Proton donor in the catalytic mechanism. Positions 91, 107, 109, 111, 124, and 127 each coordinate Mg(2+).

This sequence belongs to the Ntdp family. Requires Mg(2+) as cofactor.

It carries out the reaction a ribonucleoside 5'-triphosphate + H2O = a ribonucleoside 5'-diphosphate + phosphate + H(+). The enzyme catalyses a ribonucleoside 5'-diphosphate + H2O = a ribonucleoside 5'-phosphate + phosphate + H(+). Has nucleoside phosphatase activity towards nucleoside triphosphates and nucleoside diphosphates. The sequence is that of Nucleoside triphosphate/diphosphate phosphatase from Lactiplantibacillus plantarum (strain ATCC BAA-793 / NCIMB 8826 / WCFS1) (Lactobacillus plantarum).